We begin with the raw amino-acid sequence, 928 residues long: Interphotoreceptor matrix proteoglycan 1 (928 aa).

An N-terminal signal peptide occupies residues 1–20; it reads MHLKTGLIFLAICLALQVQG. The disordered stretch occupies residues 26-50; that stretch reads SKTNHGEAKQLADASGSDKTERTTK. Residues 29–49 are compositionally biased toward basic and acidic residues; that stretch reads NHGEAKQLADASGSDKTERTT. N-linked (GlcNAc...) asparagine glycosylation occurs at asparagine 143. The span at 164-182 shows a compositional bias: basic and acidic residues; it reads QERKDEISTDKTGGKKLED. A disordered region spans residues 164–191; the sequence is QERKDEISTDKTGGKKLEDIPSVSTGPP. Asparagine 203 and asparagine 212 each carry an N-linked (GlcNAc...) asparagine glycan. Residues 231 to 356 form the SEA 1 domain; the sequence is AEQMVEFSVT…TKLTVTDLQQ (126 aa). 2 disordered regions span residues 441-481 and 494-522; these read LSRE…TEDI and ALVS…NDLI. Residues 466–477 are compositionally biased toward basic and acidic residues; that stretch reads PSREPPHDRSPD. In terms of domain architecture, SEA 2 spans 735 to 848; sequence KELVVFFSLR…YSLDIEPADQ (114 aa). N-linked (GlcNAc...) asparagine glycosylation is found at asparagine 756 and asparagine 780. The Heparin- and hyaluronan-binding signature appears at 785–793; it reads KQLEILNFR. Asparagine 794 and asparagine 812 each carry an N-linked (GlcNAc...) asparagine glycan.

Post-translationally, highly glycosylated (N- and O-linked carbohydrates and sialic acid). Abundantly expressed in the retina (at protein level). Localizes to the photoreceptor layer of the interphotoreceptor matrix of the retina (at protein level).

The protein localises to the cell projection. The protein resides in the cilium. Its subcellular location is the photoreceptor outer segment. It is found in the secreted. It localises to the extracellular space. The protein localises to the extracellular matrix. The protein resides in the interphotoreceptor matrix. Its subcellular location is the photoreceptor inner segment. Its function is as follows. Chondroitin sulfate-, heparin- and hyaluronan-binding protein. May serve to form a basic macromolecular scaffold comprising the insoluble interphotoreceptor matrix. This Gallus gallus (Chicken) protein is Interphotoreceptor matrix proteoglycan 1.